Consider the following 128-residue polypeptide: Glycine cleavage system H protein (128 aa).

In terms of domain architecture, Lipoyl-binding spans 24–105; it reads SLTIGVTDHA…AYAAWLFKLK (82 aa). Lys65 is subject to N6-lipoyllysine.

This sequence belongs to the GcvH family. The glycine cleavage system is composed of four proteins: P, T, L and H. The cofactor is (R)-lipoate.

In terms of biological role, the glycine cleavage system catalyzes the degradation of glycine. The H protein shuttles the methylamine group of glycine from the P protein to the T protein. The polypeptide is Glycine cleavage system H protein (Aromatoleum aromaticum (strain DSM 19018 / LMG 30748 / EbN1) (Azoarcus sp. (strain EbN1))).